A 557-amino-acid polypeptide reads, in one-letter code: Formate--tetrahydrofolate ligase (557 aa).

An ATP-binding site is contributed by 65–72 (TPAGEGKT).

It belongs to the formate--tetrahydrofolate ligase family.

The enzyme catalyses (6S)-5,6,7,8-tetrahydrofolate + formate + ATP = (6R)-10-formyltetrahydrofolate + ADP + phosphate. Its pathway is one-carbon metabolism; tetrahydrofolate interconversion. The polypeptide is Formate--tetrahydrofolate ligase (Acidiphilium cryptum (strain JF-5)).